A 226-amino-acid polypeptide reads, in one-letter code: MKTKKQQYVTIKGTKNGLTLHLDDACSFDELLDGLQNMLSIEQYTDGKGQKISVHIKLGHRYLYQEQAEKLTDLIASKKDLVVHSIDSEVIAKEEAQRMKEEQEIVSVSKIVRSGQVLHVTGDLLLIGDVNPGGTIRAGGNIFVLGSLKGIAHAGYNGNNRAVIAASEMMPTQLRINHVLNRSPDHIQKGNDMECAYLDTDGNMVIERLQQLAHLRPDLTRLEGGM.

This sequence belongs to the MinC family. As to quaternary structure, interacts with MinD and FtsZ.

Functionally, cell division inhibitor that blocks the formation of polar Z ring septums. Rapidly oscillates between the poles of the cell to destabilize FtsZ filaments that have formed before they mature into polar Z rings. Prevents FtsZ polymerization. The protein is Probable septum site-determining protein MinC of Bacillus velezensis (strain DSM 23117 / BGSC 10A6 / LMG 26770 / FZB42) (Bacillus amyloliquefaciens subsp. plantarum).